The sequence spans 154 residues: Prefoldin subunit 5 (154 aa).

Ala2 is modified (N-acetylalanine). Lys42 carries the post-translational modification N6-acetyllysine. Ser56 carries the phosphoserine modification.

The protein belongs to the prefoldin subunit alpha family. Heterohexamer of two PFD-alpha type and four PFD-beta type subunits. Binds to MYC; interacts with its N-terminal domain. In terms of tissue distribution, highly expressed in pancreas and skeletal muscle and moderately in other tissues.

The protein localises to the nucleus. It is found in the cytoplasm. Its function is as follows. Binds specifically to cytosolic chaperonin (c-CPN) and transfers target proteins to it. Binds to nascent polypeptide chain and promotes folding in an environment in which there are many competing pathways for nonnative proteins. Represses the transcriptional activity of MYC. This Homo sapiens (Human) protein is Prefoldin subunit 5 (PFDN5).